We begin with the raw amino-acid sequence, 756 residues long: Inhibitor of nuclear factor kappa-B kinase subunit beta (756 aa).

A Protein kinase domain is found at 15-300 (WEMKERLGTG…DPVYGPNGCF (286 aa)). Residues 21–29 (LGTGGFGNV) and lysine 44 each bind ATP. Aspartate 145 serves as the catalytic Proton acceptor. Lysine 163 is covalently cross-linked (Glycyl lysine isopeptide (Lys-Gly) (interchain with G-Cter in ubiquitin)). Position 177 is a phosphoserine; by TBK1 and PKC/PRKCZ (serine 177). S-nitrosocysteine is present on cysteine 179. At serine 181 the chain carries Phosphoserine; by TBK1, PKC/PRKCZ and PDPK1. Proline 191 carries the hydroxyproline modification. A leucine-zipper region spans residues 458 to 479 (LLRNNSCLSKMKNSMASMSQQL). 9 positions are modified to phosphoserine; by autocatalysis: serine 670, serine 672, serine 675, serine 682, serine 689, serine 697, serine 705, serine 733, and serine 740. Residues 737-742 (LDWSWL) form an NEMO-binding region.

It belongs to the protein kinase superfamily. Ser/Thr protein kinase family. I-kappa-B kinase subfamily. In terms of assembly, component of the I-kappa-B-kinase (IKK) core complex consisting of CHUK, IKBKB and IKBKG; probably four alpha/CHUK-beta/IKBKB dimers are associated with four gamma/IKBKG subunits. The IKK core complex seems to associate with regulatory or adapter proteins to form a IKK-signalosome holo-complex. The IKK complex associates with TERF2IP/RAP1, leading to promote IKK-mediated phosphorylation of RELA/p65. Part of a complex composed of NCOA2, NCOA3, CHUK/IKKA, IKBKB, IKBKG and CREBBP. Part of a 70-90 kDa complex at least consisting of CHUK/IKKA, IKBKB, NFKBIA, RELA, ELP1 and MAP3K14. Found in a membrane raft complex, at least composed of BCL10, CARD11, DPP4 and IKBKB. Interacts with SQSTM1 through PRKCZ or PRKCI. Forms an NGF-induced complex with IKBKB, PRKCI and TRAF6. May interact with MAVS/IPS1. Interacts with NALP2. Interacts with TICAM1. Interacts with FAF1; the interaction disrupts the IKK complex formation. Interacts with ATM. Part of a ternary complex consisting of TANK, IKBKB and IKBKG. Interacts with NIBP; the interaction is direct. Interacts with ARRB1 and ARRB2. Interacts with TRIM21. Interacts with NLRC5; prevents IKBKB phosphorylation and kinase activity. Interacts with PDPK1. Interacts with EIF2AK2/PKR. The phosphorylated form interacts with PPM1A and PPM1B. Interacts with ZNF268; the interaction is further increased in a TNF-alpha-dependent manner. Interacts with IKBKE. Interacts with ZC3H12A. Interacts with AKAP13. Interacts with IFIT5; the interaction synergizes the recruitment of IKK to MAP3K7 and enhances IKK phosphorylation. Interacts with LRRC14; disrupts IKBKB-IKBKG interaction preventing I-kappa-B-kinase (IKK) core complex formation and leading to a decrease of IKBKB phosphorylation and NF-kappaB activation. Interacts with SASH1. Interacts with ARFIP2. Interacts with FKBP5. Upon cytokine stimulation, phosphorylated on Ser-177 and Ser-181 by MEKK1 and/or MAP3K14/NIK as well as TBK1 and PRKCZ; which enhances activity. Phosphorylated by MAP3K7/TAK1 in response to NOD1 and NOD2 signaling, promoting activation and phosphorylation of NF-kappa-B inhibitors, leading to NF-kappa-B activation. Once activated, autophosphorylates on the C-terminal serine cluster; which decreases activity and prevents prolonged activation of the inflammatory response. Phosphorylated by the IKK-related kinases TBK1 and IKBKE, which is associated with reduced CHUK/IKKA and IKBKB activity and NF-kappa-B-dependent gene transcription. Dephosphorylated at Ser-177 and Ser-181 by PPM1A and PPM1B. In terms of processing, ubiquitinated. Monoubiquitination involves TRIM21 that leads to inhibition of Tax-induced NF-kappa-B signaling. 'Ser-163' may not serve as a monoubiquitination site. Ubiquitination on 'Ser-163' may modulate phosphorylation on C-terminal serine residues. Post-translationally, hydroxylated by PHD1/EGLN2, loss of hydroxylation under hypoxic conditions results in activation of NF-kappa-B.

It is found in the cytoplasm. Its subcellular location is the nucleus. The protein localises to the membrane raft. It carries out the reaction L-seryl-[I-kappa-B protein] + ATP = O-phospho-L-seryl-[I-kappa-B protein] + ADP + H(+). The enzyme catalyses L-seryl-[protein] + ATP = O-phospho-L-seryl-[protein] + ADP + H(+). The catalysed reaction is L-threonyl-[protein] + ATP = O-phospho-L-threonyl-[protein] + ADP + H(+). Its function is as follows. Serine kinase that plays an essential role in the NF-kappa-B signaling pathway which is activated by multiple stimuli such as inflammatory cytokines, bacterial or viral products, DNA damages or other cellular stresses. Acts as a part of the canonical IKK complex in the conventional pathway of NF-kappa-B activation. Phosphorylates inhibitors of NF-kappa-B on 2 critical serine residues. These modifications allow polyubiquitination of the inhibitors and subsequent degradation by the proteasome. In turn, free NF-kappa-B is translocated into the nucleus and activates the transcription of hundreds of genes involved in immune response, growth control, or protection against apoptosis. In addition to the NF-kappa-B inhibitors, phosphorylates several other components of the signaling pathway including NEMO/IKBKG, NF-kappa-B subunits RELA and NFKB1, as well as IKK-related kinases TBK1 and IKBKE. IKK-related kinase phosphorylations may prevent the overproduction of inflammatory mediators since they exert a negative regulation on canonical IKKs. Phosphorylates FOXO3, mediating the TNF-dependent inactivation of this pro-apoptotic transcription factor. Also phosphorylates other substrates including NAA10, NCOA3, BCL10 and IRS1. Phosphorylates RIPK1 at 'Ser-25' which represses its kinase activity and consequently prevents TNF-mediated RIPK1-dependent cell death. Phosphorylates the C-terminus of IRF5, stimulating IRF5 homodimerization and translocation into the nucleus. The polypeptide is Inhibitor of nuclear factor kappa-B kinase subunit beta (IKBKB) (Bos taurus (Bovine)).